We begin with the raw amino-acid sequence, 434 residues long: Prenyltransferase fogH (434 aa).

E86 is a binding site for L-tryptophan. Residues R101, R248, K250, Y252, and Y346 each coordinate substrate.

Belongs to the tryptophan dimethylallyltransferase family.

The protein operates within secondary metabolite biosynthesis. Functionally, prenyltransferase; part of the gene cluster that mediates the biosynthesis of flavoglaucin and congeners (including aspergin, dihydroauroglaucin and auroglaucin), prenylated salicylaldehyde derivatives carrying a saturated or an unsaturated C-7 side chain. The PKS fogA releases the carboxylic acid (8E,10E,12E)-3,5,7-trihydroxytetradeca-8,10,12-trienoic acid as its product, as well as derivatives with one and two double bonds. FogA is indeed able to reduce the initial triketide, thus being at least partially responsible for the differently saturated heptyl side chains of flavoglaucin congeners. The oxidoreductases fogB, fogC and fogD modify the nascent polyketide in fogA-bound form and, together, fogA, fogB, fogC and fogD are necessary for the formation of the aromatic core and the cyclized PKS products are released as salicyl alcohols. In particular, fogB is responsible for oxidation of a hydroxyl group or reduction of remaining double bond(s) at the C-7 residue whereas fogD is probably involved in the reductive release of the modified PKS products. The cytochrome P450 monooxygenase fogE is then responsible for the hydroxylation at C-3 of the benzene ring. The fogE products are substrates of the prenyltransferase fogH and the prenylated benzyl alcohols are subsequently oxidized by the fogF to produce the final aryl aldehydes flavoglaucin and congeners. The short-chain dehydrogenase fogG does not seem to be involved in the biosynthesis of the prenylated salicylaldehyde derivatives. The protein is Prenyltransferase fogH of Aspergillus ruber (strain CBS 135680).